An 891-amino-acid chain; its full sequence is uncharacterized protein (891 aa).

A signal peptide spans 1 to 20; sequence MKILKSLVLLVLFMAMPAKA. Transmembrane regions (helical) follow at residues 525 to 545, 568 to 588, 614 to 634, 652 to 672, 685 to 705, and 776 to 796; these read VTIFGLMFVTGALKLTAVEVI, TYFFSAFTDGIDFFVTNVVGA, LLFIELLQIHNGLAFIAIITI, VIAFIGVTVMISLAPFFIILM, ISTLLSYVVQPTILLIFFLLI, and FLVLFTTALLFYSYCLMSYSL.

This sequence belongs to the TrbL/VirB6 family.

The protein localises to the cell membrane. This is an uncharacterized protein from Rickettsia conorii (strain ATCC VR-613 / Malish 7).